The chain runs to 474 residues: Dihydrolipoyl dehydrogenase (474 aa).

FAD contacts are provided by residues 34-51 (EGNPYDDPKGEARLGGTC), Lys60, and Gly124. The cysteines at positions 51 and 56 are disulfide-linked. NAD(+)-binding positions include 189 to 193 (GAGVI), Glu212, Val246, and 278 to 281 (SVGR). Residues Asp321 and Ala329 each contribute to the FAD site. His453 serves as the catalytic Proton acceptor.

This sequence belongs to the class-I pyridine nucleotide-disulfide oxidoreductase family. Requires FAD as cofactor.

The protein localises to the cytoplasm. The catalysed reaction is N(6)-[(R)-dihydrolipoyl]-L-lysyl-[protein] + NAD(+) = N(6)-[(R)-lipoyl]-L-lysyl-[protein] + NADH + H(+). Its function is as follows. The branched-chain alpha-keto dehydrogenase complex catalyzes the overall conversion of alpha-keto acids to acyl-CoA and CO(2). It contains multiple copies of 3 enzymatic components: branched-chain alpha-keto acid decarboxylase (E1), lipoamide acyltransferase (E2) and lipoamide dehydrogenase (E3). The polypeptide is Dihydrolipoyl dehydrogenase (odhL) (Cupriavidus necator (strain ATCC 17699 / DSM 428 / KCTC 22496 / NCIMB 10442 / H16 / Stanier 337) (Ralstonia eutropha)).